A 491-amino-acid chain; its full sequence is 3-epi-6-deoxocathasterone 23-monooxygenase CYP90D1 (491 aa).

The helical transmembrane segment at 7–27 (LLFFSFFFFIIIVIFNKINGL) threads the bilayer. Cys442 is a heme binding site.

It belongs to the cytochrome P450 family. Heme is required as a cofactor. Expressed in leaf vascular tissue.

The protein resides in the endoplasmic reticulum membrane. It carries out the reaction 3-epi-6-deoxocathasterone + reduced [NADPH--hemoprotein reductase] + O2 = 6-deoxotyphasterol + oxidized [NADPH--hemoprotein reductase] + H2O + H(+). The enzyme catalyses (22S,24R)-22-hydroxy-5alpha-ergostan-3-one + reduced [NADPH--hemoprotein reductase] + O2 = 3-dehydro-6-deoxoteasterone + oxidized [NADPH--hemoprotein reductase] + H2O + H(+). It functions in the pathway plant hormone biosynthesis; brassinosteroid biosynthesis. Its function is as follows. Involved in brassinosteroid (BR) biosynthesis. May convert teasterone (TE) to 3-dehydroteasterone (3DT, 3-DHT), or 6-deoxoteasterone (6-deoxoTE) to 3-dehydro-6-deoxoteasterone (6-deoxo3DT, 6-deoxo3DHT). C-23 hydroxylase that converts directly (22S,24R)-22-hydroxy-5-alpha-ergostan-3-one and 3-epi-6-deoxocathasterone to 3-dehydro-6-deoxoteasterone (6-deoxo3DT, 6-deoxo3DHT) and 6-deoxotyphasterol (6-deoxoTY), respectively. These C-23 hydroxylation shortcuts bypass campestanol, 6-deoxocathasterone, and 6-deoxoteasterone (6-deoxoTE). Also catalyzes the conversion of cathasterone to teasterone (TE), 6-deoxotyphasterol (6-deoxoTY) to 6-deoxocathasterone (6-deoxoCT), (22S,24R)-22-hydroxyergost-4-en-3-one (22-OH-4-en-3-one) to (22R,23R)-22,23-dihydroxy-campest-4-en-3-one (22,23-diOH-4-en-3-one) and (22S)-22-hydroxycampesterol (22-OHCR) to (22R,23R)-22,23-dihydroxycampesterol (22,23-diOHCR). The sequence is that of 3-epi-6-deoxocathasterone 23-monooxygenase CYP90D1 from Arabidopsis thaliana (Mouse-ear cress).